The chain runs to 101 residues: Citrate lyase acyl carrier protein (101 aa).

Position 14 is an O-(phosphoribosyl dephospho-coenzyme A)serine (S14).

The protein belongs to the CitD family. In terms of assembly, oligomer with a subunit composition of (alpha,beta,gamma)6.

The protein localises to the cytoplasm. Functionally, covalent carrier of the coenzyme of citrate lyase. In Lacticaseibacillus casei (strain BL23) (Lactobacillus casei), this protein is Citrate lyase acyl carrier protein.